A 287-amino-acid polypeptide reads, in one-letter code: MTVKFSQVSYVYQKGTPFEHVALRDIETTFQQGKYYAVIGQTGSGKSTLIQHFNGLLKPSTGKLQIDDITITHKTKDKVLKQIRKRIGVVFQFPESQLFEDSVEREILFGPKNFNMPIDEVKARAYKLLIDFGFSRDILQQSPFQMSGGQMRKIAITSILAMDPDIVILDEPTAGLDPKSRDQIMKMIKKLQVEQNKTIILVTHEMNDVAKYVDEIKIMKQGQLVEECSPRKLFSDTNYVNQLHLDVPDVVKLQRDIEDKYQYYFNKIALTEDEFIDMYKEWQEDER.

Positions V3 to D246 constitute an ABC transporter domain. Residue G40–S47 participates in ATP binding.

The protein belongs to the ABC transporter superfamily. Energy-coupling factor EcfA family. In terms of assembly, forms a stable energy-coupling factor (ECF) transporter complex composed of 2 membrane-embedded substrate-binding proteins (S component), 2 ATP-binding proteins (A component) and 2 transmembrane proteins (T component).

The protein resides in the cell membrane. Its function is as follows. ATP-binding (A) component of a common energy-coupling factor (ECF) ABC-transporter complex. Unlike classic ABC transporters this ECF transporter provides the energy necessary to transport a number of different substrates. This Staphylococcus saprophyticus subsp. saprophyticus (strain ATCC 15305 / DSM 20229 / NCIMB 8711 / NCTC 7292 / S-41) protein is Energy-coupling factor transporter ATP-binding protein EcfA2.